Consider the following 233-residue polypeptide: Lipoprotein-releasing system ATP-binding protein LolD (233 aa).

The ABC transporter domain maps to 6 to 233; the sequence is LQCDNLCKRY…TAELSLMGAE (228 aa). 42-49 provides a ligand contact to ATP; that stretch reads GSSGSGKS.

This sequence belongs to the ABC transporter superfamily. Lipoprotein translocase (TC 3.A.1.125) family. As to quaternary structure, the complex is composed of two ATP-binding proteins (LolD) and two transmembrane proteins (LolC and LolE).

Its subcellular location is the cell inner membrane. Part of the ABC transporter complex LolCDE involved in the translocation of mature outer membrane-directed lipoproteins, from the inner membrane to the periplasmic chaperone, LolA. Responsible for the formation of the LolA-lipoprotein complex in an ATP-dependent manner. The chain is Lipoprotein-releasing system ATP-binding protein LolD from Salmonella choleraesuis (strain SC-B67).